The following is a 239-amino-acid chain: Orotidine 5'-phosphate decarboxylase (239 aa).

Residues aspartate 12, lysine 34, 61 to 70 (DLKFHDIPNT), threonine 125, arginine 188, glutamine 197, glycine 217, and arginine 218 each bind substrate. The active-site Proton donor is the lysine 63.

Belongs to the OMP decarboxylase family. Type 1 subfamily. Homodimer.

The catalysed reaction is orotidine 5'-phosphate + H(+) = UMP + CO2. Its pathway is pyrimidine metabolism; UMP biosynthesis via de novo pathway; UMP from orotate: step 2/2. Catalyzes the decarboxylation of orotidine 5'-monophosphate (OMP) to uridine 5'-monophosphate (UMP). The chain is Orotidine 5'-phosphate decarboxylase from Syntrophomonas wolfei subsp. wolfei (strain DSM 2245B / Goettingen).